An 898-amino-acid polypeptide reads, in one-letter code: Coatomer subunit gamma (898 aa).

HEAT repeat units lie at residues 62–99 (TEAT…ISQD), 170–207 (EIVK…HDRL), 280–317 (KEIN…TNPT), 319–352 (VIPC…GNES), 353–389 (NVER…KFPK), and 392–427 (KHLI…NIPE). The disordered stretch occupies residues 592 to 631 (GKSPFSTGASKKGDSVTGTPKSNNASNNNNNNEESSGPES). A compositionally biased stretch (low complexity) spans 613 to 626 (SNNASNNNNNNEES).

Belongs to the COPG family. In terms of assembly, oligomeric complex that consists of at least the alpha, beta, beta', gamma, delta, epsilon and zeta subunits.

The protein resides in the cytoplasm. The protein localises to the golgi apparatus membrane. It localises to the cytoplasmic vesicle. Its subcellular location is the COPI-coated vesicle membrane. Functionally, the coatomer is a cytosolic protein complex that binds to dilysine motifs and reversibly associates with Golgi non-clathrin-coated vesicles, which further mediate biosynthetic protein transport from the ER, via the Golgi up to the trans Golgi network. Coatomer complex is required for budding from Golgi membranes, and is essential for the retrograde Golgi-to-ER transport of dilysine-tagged proteins. The chain is Coatomer subunit gamma (copG) from Dictyostelium discoideum (Social amoeba).